Reading from the N-terminus, the 67-residue chain is Protein AaeX (67 aa).

Helical transmembrane passes span 3–23 and 43–63; these read VLPV…ELII and LVWH…YLVS.

This sequence belongs to the AaeX family.

The protein localises to the cell membrane. This is Protein AaeX from Pantoea vagans (strain C9-1) (Pantoea agglomerans (strain C9-1)).